Here is a 388-residue protein sequence, read N- to C-terminus: Chorismate synthase (388 aa).

Residues R39 and R45 each contribute to the NADP(+) site. FMN contacts are provided by residues 130–132, 251–252, G296, 311–315, and R337; these read RSS, NA, and KPIPT.

Belongs to the chorismate synthase family. Homotetramer. It depends on FMNH2 as a cofactor.

It carries out the reaction 5-O-(1-carboxyvinyl)-3-phosphoshikimate = chorismate + phosphate. It participates in metabolic intermediate biosynthesis; chorismate biosynthesis; chorismate from D-erythrose 4-phosphate and phosphoenolpyruvate: step 7/7. Catalyzes the anti-1,4-elimination of the C-3 phosphate and the C-6 proR hydrogen from 5-enolpyruvylshikimate-3-phosphate (EPSP) to yield chorismate, which is the branch point compound that serves as the starting substrate for the three terminal pathways of aromatic amino acid biosynthesis. This reaction introduces a second double bond into the aromatic ring system. This Streptococcus pyogenes serotype M1 protein is Chorismate synthase.